The primary structure comprises 130 residues: NADH-quinone oxidoreductase subunit A (130 aa).

3 helical membrane passes run 17–37, 74–94, and 99–119; these read YIFVGLFFVVACFISCVMLAL, LVGILFIIFDLEIIFLFPWAV, and LGPAAFVSVLIFLIILTVGFV.

This sequence belongs to the complex I subunit 3 family. As to quaternary structure, NDH-1 is composed of 14 different subunits. Subunits NuoA, H, J, K, L, M, N constitute the membrane sector of the complex.

It localises to the cell inner membrane. The enzyme catalyses a quinone + NADH + 5 H(+)(in) = a quinol + NAD(+) + 4 H(+)(out). Functionally, NDH-1 shuttles electrons from NADH, via FMN and iron-sulfur (Fe-S) centers, to quinones in the respiratory chain. The immediate electron acceptor for the enzyme in this species is believed to be ubiquinone. Couples the redox reaction to proton translocation (for every two electrons transferred, four hydrogen ions are translocated across the cytoplasmic membrane), and thus conserves the redox energy in a proton gradient. The polypeptide is NADH-quinone oxidoreductase subunit A (Neorickettsia sennetsu (strain ATCC VR-367 / Miyayama) (Ehrlichia sennetsu)).